The sequence spans 401 residues: Glutamyl-tRNA reductase (401 aa).

Residues 45-48 (TCNR), Ser101, 106-108 (EDQ), and Gln112 each bind substrate. Cys46 acts as the Nucleophile in catalysis. 177 to 182 (GYGDVG) is an NADP(+) binding site.

It belongs to the glutamyl-tRNA reductase family. Homodimer.

It carries out the reaction (S)-4-amino-5-oxopentanoate + tRNA(Glu) + NADP(+) = L-glutamyl-tRNA(Glu) + NADPH + H(+). It functions in the pathway porphyrin-containing compound metabolism; protoporphyrin-IX biosynthesis; 5-aminolevulinate from L-glutamyl-tRNA(Glu): step 1/2. Catalyzes the NADPH-dependent reduction of glutamyl-tRNA(Glu) to glutamate 1-semialdehyde (GSA). The protein is Glutamyl-tRNA reductase of Clostridium botulinum (strain Alaska E43 / Type E3).